Here is a 67-residue protein sequence, read N- to C-terminus: Small ribosomal subunit protein bS21 (67 aa).

It belongs to the bacterial ribosomal protein bS21 family.

This is Small ribosomal subunit protein bS21 from Oleidesulfovibrio alaskensis (strain ATCC BAA-1058 / DSM 17464 / G20) (Desulfovibrio alaskensis).